The sequence spans 209 residues: MKKAIIGKKVGMTQIFDENGRVIPVTVVEAGPCVVVQKKTVETDGYDAIQVGFGELREKLVNKPRRGHFAKAGVSLRRTLKEFRMEDVANYNVGDEIKVDTFEIGDKVDVSGVSKGKGFQGTIKRWNASRGPMSHGSKFHRAPGSMGAASDPSRTFKNKRMPGHMGAKNTTVLNLEVVKIMPEKNIILIKGGIPGPNKGTIVIRNSVKA.

Residues 127–153 form a disordered region; it reads NASRGPMSHGSKFHRAPGSMGAASDPS.

This sequence belongs to the universal ribosomal protein uL3 family. Part of the 50S ribosomal subunit. Forms a cluster with proteins L14 and L19.

Its function is as follows. One of the primary rRNA binding proteins, it binds directly near the 3'-end of the 23S rRNA, where it nucleates assembly of the 50S subunit. This is Large ribosomal subunit protein uL3 from Clostridium perfringens (strain SM101 / Type A).